We begin with the raw amino-acid sequence, 481 residues long: Chromosomal replication initiator protein DnaA (481 aa).

Residues 1-74 form a domain I, interacts with DnaA modulators region; that stretch reads MSQDLWSFCL…ELGAEFHGAP (74 aa). The segment at 74–144 is domain II; that stretch reads PIEIELVLPA…TASDLAYEKT (71 aa). The tract at residues 101-123 is disordered; that stretch reads AGPAPAPTPSQAPAATAAAPAVV. Low complexity predominate over residues 111–123; sequence QAPAATAAAPAVV. A domain III, AAA+ region region spans residues 145–361; that stretch reads RLNADFTFDT…GALNKVVAFA (217 aa). 4 residues coordinate ATP: glycine 189, glycine 191, lysine 192, and threonine 193. Residues 362 to 481 are domain IV, binds dsDNA; it reads RFHGRGITLE…VHVLTQVLRG (120 aa).

This sequence belongs to the DnaA family. As to quaternary structure, oligomerizes as a right-handed, spiral filament on DNA at oriC.

The protein localises to the cytoplasm. In terms of biological role, plays an essential role in the initiation and regulation of chromosomal replication. ATP-DnaA binds to the origin of replication (oriC) to initiate formation of the DNA replication initiation complex once per cell cycle. Binds the DnaA box (a 9 base pair repeat at the origin) and separates the double-stranded (ds)DNA. Forms a right-handed helical filament on oriC DNA; dsDNA binds to the exterior of the filament while single-stranded (ss)DNA is stabiized in the filament's interior. The ATP-DnaA-oriC complex binds and stabilizes one strand of the AT-rich DNA unwinding element (DUE), permitting loading of DNA polymerase. After initiation quickly degrades to an ADP-DnaA complex that is not apt for DNA replication. Binds acidic phospholipids. The sequence is that of Chromosomal replication initiator protein DnaA from Aromatoleum aromaticum (strain DSM 19018 / LMG 30748 / EbN1) (Azoarcus sp. (strain EbN1)).